The primary structure comprises 316 residues: Ribosomal RNA small subunit methyltransferase H (316 aa).

S-adenosyl-L-methionine-binding positions include 35–37 (AGH), D55, F84, D105, and Q112.

It belongs to the methyltransferase superfamily. RsmH family.

The protein resides in the cytoplasm. It catalyses the reaction cytidine(1402) in 16S rRNA + S-adenosyl-L-methionine = N(4)-methylcytidine(1402) in 16S rRNA + S-adenosyl-L-homocysteine + H(+). Its function is as follows. Specifically methylates the N4 position of cytidine in position 1402 (C1402) of 16S rRNA. In Streptococcus pneumoniae serotype 4 (strain ATCC BAA-334 / TIGR4), this protein is Ribosomal RNA small subunit methyltransferase H.